A 351-amino-acid chain; its full sequence is Putative F-box protein At4g09790 (351 aa).

The F-box domain occupies 1-51 (MTTICDLPRDLVARILSRVPLTSMRRVRFTCKRWNTISKDPSFAKTHFGKA).

This chain is Putative F-box protein At4g09790, found in Arabidopsis thaliana (Mouse-ear cress).